Consider the following 445-residue polypeptide: Exodeoxyribonuclease 7 large subunit (445 aa).

It belongs to the XseA family. Heterooligomer composed of large and small subunits.

The protein localises to the cytoplasm. It carries out the reaction Exonucleolytic cleavage in either 5'- to 3'- or 3'- to 5'-direction to yield nucleoside 5'-phosphates.. Its function is as follows. Bidirectionally degrades single-stranded DNA into large acid-insoluble oligonucleotides, which are then degraded further into small acid-soluble oligonucleotides. The polypeptide is Exodeoxyribonuclease 7 large subunit (Limosilactobacillus reuteri (strain DSM 20016) (Lactobacillus reuteri)).